A 424-amino-acid polypeptide reads, in one-letter code: Double homeobox protein 4 (424 aa).

Polar residues predominate over residues 1-10; sequence MALPTPSDST. Disordered regions lie at residues 1-24, 72-102, 218-362, and 388-414; these read MALP…RRRL, SRQL…TAVT, LQPS…LQEP, and QPLL…PLSE. 2 consecutive DNA-binding regions (homeobox) follow at residues 19–78 and 94–153; these read GRRR…LRQH and GRRK…PGQG. A compositionally biased stretch (basic and acidic residues) spans 265–274; that stretch reads KSREDRDPQR. Composition is skewed to low complexity over residues 278-302 and 319-329; these read PGPC…LAPP and AGAAWEPQAGA. Residues 327 to 424 are required for interaction with EP300 and CREBBP, and for transcriptional activation of target genes; that stretch reads AGAAPPPQPA…EEYRALLEEL (98 aa). Positions 405–424 are important for transcriptional activation of target genes; sequence AASLEAPLSEEEYRALLEEL.

Belongs to the paired homeobox family. As to quaternary structure, binds DNA as a monomer. Interacts (via C-terminus) with EP300 and CREBBP. Isoform 1: Does not seem to be expressed in normal muscle, but is detected in muscle of individuals with FSHD, and also in testis (at protein level). Isoform 1: Does not seem to be expressed in normal muscle, but in muscle of individuals with FSHD, where it may be toxic to cells. Isoform 2: Detected in skeletal muscle, fibroblasts and testis from healthy individuals.

The protein resides in the nucleus. It is found in the cytoplasm. Transcription factor that is selectively and transiently expressed in cleavage-stage embryos. Binds to double-stranded DNA elements with the consensus sequence 5'-TAATCTAATCA-3'. Binds to chromatin containing histone H3 acetylated at 'Lys-27' (H3K27ac) and promotes deacetylation of H3K27ac. In parallel, binds to chromatin that lacks histone H3 acetylation at 'Lys-27' (H3K27ac) and recruits EP300 and CREBBP to promote acetylation of histone H3 at 'Lys-27' at new sites. Involved in transcriptional regulation of numerous genes, primarily as transcriptional activator, but also mediates repression of a set of target genes. Promotes expression of ZSCAN4 and KDM4E, two proteins with essential roles during early embryogenesis. Promotes nuclear translocation of CTNNB1/beta-catenin and its subsequent activation of target genes. Heterologous expression in cultured embryonic stem cells mediates transcription of HERVL retrotransposons and transcripts derived from ACRO1 and HSATII satellite repeats. May activate expression of PITX1. May regulate microRNA (miRNA) expression. Inappropriate expression can inhibit myogenesis and promote apoptosis. Functionally, probably inactive as a transcriptional activator, due to the absence of the C-terminal region that is important for transcriptional activation. Can inhibit transcriptional activation mediated by isoform 1. Heterologous expression of isoform 2 has no deleterious effect on cell survival. This is Double homeobox protein 4 from Homo sapiens (Human).